Reading from the N-terminus, the 375-residue chain is MTEPQSVGTVAPQTAHFDEPLPLRSGGTLAGYDLVYETYGQLNAARSNAVLVCHALSGSHHVAGVYADDPRNVGWWDNLVGPGKPLDTRKFFVIGVNNLGGCYGSTGPGSVNPATGRPWGADFPFVTVEDWVDAQARLADRLGIQRFAAIVGGSLGGMQALSWTLQYPERVGHAAVIASAPKLTAQNIAFNEVARQAILTDPDFHGGHYYEHGVVPARGLKLARMVGHITYLSDDSMGEKFGRSLRHGKAVYSYDVEFEIESYLRYQGDKFAGYFDANTYLLTTKTLDYFDPAFEHGGNLNAALARASADFLVVSFTTDWRFSPARSREIVYALLHNRRNVSYAEIDCPAGHDSFLLDDPQYHALLSAWFDRIEV.

The AB hydrolase-1 domain maps to 48–358 (NAVLVCHALS…PAGHDSFLLD (311 aa)). Catalysis depends on Ser154, which acts as the Nucleophile. Residue Arg224 coordinates substrate. Active-site residues include Asp319 and His352. A substrate-binding site is contributed by Asp353.

It belongs to the AB hydrolase superfamily. MetX family. As to quaternary structure, homodimer.

Its subcellular location is the cytoplasm. The catalysed reaction is L-homoserine + succinyl-CoA = O-succinyl-L-homoserine + CoA. It functions in the pathway amino-acid biosynthesis; L-methionine biosynthesis via de novo pathway; O-succinyl-L-homoserine from L-homoserine: step 1/1. Functionally, transfers a succinyl group from succinyl-CoA to L-homoserine, forming succinyl-L-homoserine. In Azoarcus sp. (strain BH72), this protein is Homoserine O-succinyltransferase.